Reading from the N-terminus, the 81-residue chain is EC protein I/II (81 aa).

It belongs to the metallothionein superfamily. Type 15 family.

In terms of biological role, binds 5 molecules of zinc. May have a role in Zn(2+) homeostasis during embryogenesis. The sequence is that of EC protein I/II from Triticum aestivum (Wheat).